A 187-amino-acid polypeptide reads, in one-letter code: Nuclear transcription factor Y subunit C-8 (187 aa).

The segment at 163–187 (WPGAWTSVSGEEEEARGKKGGDDGN) is disordered. A compositionally biased stretch (basic and acidic residues) spans 177-187 (ARGKKGGDDGN).

It belongs to the NFYC/HAP5 subunit family. As to quaternary structure, heterotrimeric transcription factor composed of three components, NF-YA, NF-YB and NF-YC. NF-YB and NF-YC must interact and dimerize for NF-YA association and DNA binding. In terms of tissue distribution, expressed in flowers and siliques.

The protein localises to the nucleus. Stimulates the transcription of various genes by recognizing and binding to a CCAAT motif in promoters. The protein is Nuclear transcription factor Y subunit C-8 (NFYC8) of Arabidopsis thaliana (Mouse-ear cress).